A 213-amino-acid chain; its full sequence is Pyrrolidone-carboxylate peptidase (213 aa).

Catalysis depends on residues glutamate 78, cysteine 141, and histidine 165.

This sequence belongs to the peptidase C15 family. As to quaternary structure, homotetramer.

The protein localises to the cytoplasm. The catalysed reaction is Release of an N-terminal pyroglutamyl group from a polypeptide, the second amino acid generally not being Pro.. Functionally, removes 5-oxoproline from various penultimate amino acid residues except L-proline. The polypeptide is Pyrrolidone-carboxylate peptidase (Staphylococcus saprophyticus subsp. saprophyticus (strain ATCC 15305 / DSM 20229 / NCIMB 8711 / NCTC 7292 / S-41)).